Consider the following 78-residue polypeptide: Small ribosomal subunit protein bS18A (78 aa).

Belongs to the bacterial ribosomal protein bS18 family. As to quaternary structure, part of the 30S ribosomal subunit. Forms a tight heterodimer with protein bS6.

Binds as a heterodimer with protein bS6 to the central domain of the 16S rRNA, where it helps stabilize the platform of the 30S subunit. This chain is Small ribosomal subunit protein bS18A, found in Streptomyces avermitilis (strain ATCC 31267 / DSM 46492 / JCM 5070 / NBRC 14893 / NCIMB 12804 / NRRL 8165 / MA-4680).